Here is a 292-residue protein sequence, read N- to C-terminus: 4-hydroxy-tetrahydrodipicolinate synthase (292 aa).

Thr45 contacts pyruvate. Catalysis depends on Tyr133, which acts as the Proton donor/acceptor. Lys161 acts as the Schiff-base intermediate with substrate in catalysis. A pyruvate-binding site is contributed by Ile203.

It belongs to the DapA family. As to quaternary structure, homotetramer; dimer of dimers.

Its subcellular location is the cytoplasm. The catalysed reaction is L-aspartate 4-semialdehyde + pyruvate = (2S,4S)-4-hydroxy-2,3,4,5-tetrahydrodipicolinate + H2O + H(+). It participates in amino-acid biosynthesis; L-lysine biosynthesis via DAP pathway; (S)-tetrahydrodipicolinate from L-aspartate: step 3/4. Functionally, catalyzes the condensation of (S)-aspartate-beta-semialdehyde [(S)-ASA] and pyruvate to 4-hydroxy-tetrahydrodipicolinate (HTPA). The chain is 4-hydroxy-tetrahydrodipicolinate synthase from Vibrio cholerae serotype O1 (strain ATCC 39541 / Classical Ogawa 395 / O395).